A 517-amino-acid polypeptide reads, in one-letter code: Protein MGF 505-2R (517 aa).

This sequence belongs to the asfivirus MGF 505 family.

Functionally, plays a role in virus cell tropism, and may be required for efficient virus replication in macrophages. The protein is Protein MGF 505-2R of Ornithodoros (relapsing fever ticks).